The primary structure comprises 371 residues: Glutamate 5-kinase (371 aa).

Residue lysine 14 coordinates ATP. Substrate contacts are provided by serine 52, aspartate 139, and asparagine 151. Residue 171–172 participates in ATP binding; that stretch reads SD. Residues 275–353 form the PUA domain; it reads EGRLHLDSGA…ADLAMELGPS (79 aa).

This sequence belongs to the glutamate 5-kinase family.

Its subcellular location is the cytoplasm. It carries out the reaction L-glutamate + ATP = L-glutamyl 5-phosphate + ADP. Its pathway is amino-acid biosynthesis; L-proline biosynthesis; L-glutamate 5-semialdehyde from L-glutamate: step 1/2. Its function is as follows. Catalyzes the transfer of a phosphate group to glutamate to form L-glutamate 5-phosphate. This chain is Glutamate 5-kinase, found in Frankia casuarinae (strain DSM 45818 / CECT 9043 / HFP020203 / CcI3).